A 250-amino-acid polypeptide reads, in one-letter code: 7-cyano-7-deazaguanine synthase (250 aa).

An ATP-binding site is contributed by 28-38 (LSGGLDSATCV). Zn(2+) is bound by residues Cys-213, Cys-226, Cys-229, and Cys-232.

It belongs to the QueC family. Requires Zn(2+) as cofactor.

The enzyme catalyses 7-carboxy-7-deazaguanine + NH4(+) + ATP = 7-cyano-7-deazaguanine + ADP + phosphate + H2O + H(+). It participates in purine metabolism; 7-cyano-7-deazaguanine biosynthesis. Catalyzes the ATP-dependent conversion of 7-carboxy-7-deazaguanine (CDG) to 7-cyano-7-deazaguanine (preQ(0)). The polypeptide is 7-cyano-7-deazaguanine synthase (Rhodopirellula baltica (strain DSM 10527 / NCIMB 13988 / SH1)).